The primary structure comprises 168 residues: Segregation and condensation protein B (168 aa).

It belongs to the ScpB family. Homodimer. Homodimerization may be required to stabilize the binding of ScpA to the Smc head domains. Component of a cohesin-like complex composed of ScpA, ScpB and the Smc homodimer, in which ScpA and ScpB bind to the head domain of Smc. The presence of the three proteins is required for the association of the complex with DNA.

Its subcellular location is the cytoplasm. In terms of biological role, participates in chromosomal partition during cell division. May act via the formation of a condensin-like complex containing Smc and ScpA that pull DNA away from mid-cell into both cell halves. The chain is Segregation and condensation protein B from Caldanaerobacter subterraneus subsp. tengcongensis (strain DSM 15242 / JCM 11007 / NBRC 100824 / MB4) (Thermoanaerobacter tengcongensis).